The primary structure comprises 400 residues: D(3) dopamine receptor (400 aa).

The Extracellular segment spans residues Met1 to Tyr32. N-linked (GlcNAc...) asparagine glycosylation is found at Asn12 and Asn19. Residues Ala33–Leu55 form a helical membrane-spanning segment. At Lys56–Asn65 the chain is on the cytoplasmic side. A helical transmembrane segment spans residues Tyr66–Tyr88. Residues Leu89–Asp104 are Extracellular-facing. An N-linked (GlcNAc...) asparagine glycan is attached at Asn97. The cysteines at positions 103 and 181 are disulfide-linked. A helical membrane pass occupies residues Val105–Ile126. Topologically, residues Asp127 to Arg149 are cytoplasmic. Residues Val150–Phe170 form a helical membrane-spanning segment. Over Gly171–Asp187 the chain is Extracellular. Residue Asn173 is glycosylated (N-linked (GlcNAc...) asparagine). A helical transmembrane segment spans residues Phe188–Ala209. Over Arg210–Gln329 the chain is Cytoplasmic. The chain crosses the membrane as a helical span at residues Met330–Leu351. The Extracellular portion of the chain corresponds to Asn352–Ser366. Cys355 and Cys358 are joined by a disulfide. Residues Ala367 to Phe386 form a helical membrane-spanning segment. The Cytoplasmic portion of the chain corresponds to Asn387–Cys400.

This sequence belongs to the G-protein coupled receptor 1 family. As to quaternary structure, interacts with CLIC6. Interacts with GRK4. Interacts with PALM. Interacts with FLNA (via filamin repeat 21); increases PKA-mediated phosphorylation of FLNA. Post-translationally, phosphorylated by GRK4. In terms of processing, palmitoylated.

Its subcellular location is the cell membrane. In terms of biological role, dopamine receptor whose activity is mediated by G proteins which inhibit adenylyl cyclase. Promotes cell proliferation. The polypeptide is D(3) dopamine receptor (DRD3) (Chlorocebus aethiops (Green monkey)).